The chain runs to 178 residues: MSRIGLAPIAVPKGVDITINGQVVNVKGAKGTLEVELPEPITAAVEDDEIKVSRPDDDRKNRALHGLARSLVNNAVVGVTEGYTKKMEIFGVGYRVQQKGKDLEFSLGYSHPILIEAPEGITFAVDGATKLSVSGIDKQLVGQVAAYIRRLRKDDPYKGKGIRYDGEQVRRKVGKTGK.

It belongs to the universal ribosomal protein uL6 family. Part of the 50S ribosomal subunit.

This protein binds to the 23S rRNA, and is important in its secondary structure. It is located near the subunit interface in the base of the L7/L12 stalk, and near the tRNA binding site of the peptidyltransferase center. The sequence is that of Large ribosomal subunit protein uL6 from Corynebacterium aurimucosum (strain ATCC 700975 / DSM 44827 / CIP 107346 / CN-1) (Corynebacterium nigricans).